Here is a 436-residue protein sequence, read N- to C-terminus: Prenyltransferase nscD (436 aa).

Belongs to the tryptophan dimethylallyltransferase family.

It functions in the pathway secondary metabolite biosynthesis. Functionally, prenyltransferase; part of the gene cluster that mediates the biosynthesis of neosartoricin B, a prenylated anthracenone that probably exhibits T-cell antiproliferative activity, suggestive of a physiological role as an immunosuppressive agent. The non-reducing polyketide synthase nscA probably synthesizes and cyclizes the decaketide backbone. The hydrolase nscB then mediates the product release through hydrolysis followed by spontaneous decarboxylation. The prenyltransferase nscD catalyzes the addition of the dimethylallyl group to the aromatic C5. The FAD-dependent monooxygenase nscC is then responsible for the stereospecific hydroxylation at C2. Neosartoricin B can be converted into two additional compounds neosartoricins C and D. Neosartoricin C is a spirocyclic compound that is cyclized through the attack of C3 hydroxyl on C14, followed by dehydration. On the other hand, neosartoricin D is a further cyclized compound in which attack of C2 on C14 in neosartoricin C results in the formation of the acetal-containing dioxabicyclo-octanone ring. Both of these compounds are novel and possibly represent related metabolites of the gene cluster. The polypeptide is Prenyltransferase nscD (Arthroderma otae (strain ATCC MYA-4605 / CBS 113480) (Microsporum canis)).